The primary structure comprises 373 residues: Asporin (373 aa).

The first 15 residues, 1-15 (MKEYVMLLLLAVCSA), serve as a signal peptide directing secretion. The propeptide occupies 16–32 (KPFFSPSHTALKNMMLK). An O-linked (GalNAc...) serine glycan is attached at serine 48. The 37-residue stretch at 59–95 (FFPFDLFPTCPFGCQCYSRVVHCSDLGLTSVPNNIPF) folds into the LRRNT domain. 2 disulfide bridges follow: cysteine 68–cysteine 74 and cysteine 72–cysteine 81. LRR repeat units lie at residues 96 to 117 (DTRM…DFKG), 120 to 141 (SLYA…TFLT), 144 to 166 (KLRR…PKSL), 167 to 186 (AELR…TFKG), 189 to 212 (ALHV…AFEG), 235 to 255 (TLLE…EDLK), 259 to 280 (ELQR…TFAN), 283 to 305 (RVRE…QELK), 306 to 327 (YLQI…DFCP), 328 to 349 (TVPK…PMKY), and 350 to 373 (WEIQ…NVGK). The tract at residues 159–205 (PLNLPKSLAELRIHDNKVKKIQKDTFKGMNALHVLEMSANPLENNGI) is interaction with TGFB1. Asparagine 275 is a glycosylation site (N-linked (GlcNAc...) asparagine). Cysteine 326 and cysteine 359 are oxidised to a cystine.

Belongs to the small leucine-rich proteoglycan (SLRP) family. SLRP class I subfamily. As to quaternary structure, interacts with type I collagen. DCN can inhibit collagen binding. Interacts with TGFB1, TGFB2 and TGFB3. DCN, BGN, and FMOD inhibit binding to TGFB1. Interacts with BMP2. Interacts in vitro with type II collagen. In terms of tissue distribution, higher expression in heart, also detected in kidney, stomach, testes, and skin but only weakly in lung, skeletal muscle, small intestine, and thymus. Expressed specifically and predominantly in the periodontal ligament (PDL). During tooth development, strong expression is seen in the dental follicle, which is the progenitor tissue that forms cementum, alveolar bone, and the PDL. Expressed in the perichondria of the maxilla, mandible, vertebrae, and long bones. Predominantly expressed in the perichondrium/periosteum of long bones (at protein level).

The protein localises to the secreted. The protein resides in the extracellular space. It is found in the extracellular matrix. Binds calcium and plays a role in osteoblast-driven collagen biomineralization activity. Critical regulator of TGF-beta in articular cartilage and plays an essential role in cartilage homeostasis and osteoarthritis (OA) pathogenesis. Negatively regulates chondrogenesis in the articular cartilage by blocking the TGF-beta/receptor interaction on the cell surface and inhibiting the canonical TGF-beta/Smad signal. Negatively regulates periodontal ligament (PDL) differentiation and mineralization to ensure that the PDL is not ossified and to maintain homeostasis of the tooth-supporting system. Inhibits BMP2-induced cytodifferentiation of PDL cells by preventing its binding to BMPR1B/BMP type-1B receptor, resulting in inhibition of BMP-dependent activation of SMAD proteins. Inhibits the interaction between TGFB1 and TGF-beta receptor type II in the presence of heparin/heparan sulfate in vitro. The chain is Asporin (Aspn) from Mus musculus (Mouse).